The following is a 541-amino-acid chain: Presenilin homolog (541 aa).

Polar residues-rich tracts occupy residues 1-14 and 43-52; these read MAAV…SSGL and NNYGSSNQDQ. Disordered stretches follow at residues 1-52 and 69-92; these read MAAV…NQDQ and CGSR…NEME. Over 1-106 the chain is Cytoplasmic; the sequence is MAAVNLQASC…LKYGAQHVIK (106 aa). The chain crosses the membrane as a helical span at residues 107-127; sequence LFVPVSLCMLVVVATINSISF. The Lumenal segment spans residues 128–154; sequence YNSTDVYLLYTPFHEQSPEPSVKFWSA. N129 is a glycosylation site (N-linked (GlcNAc...) asparagine). Residues 155–175 form a helical membrane-spanning segment; the sequence is LANSLILMSVVVVMTFLLIVL. Topologically, residues 176–182 are cytoplasmic; it reads YKKRCYR. Residues 183 to 203 traverse the membrane as a helical segment; that stretch reads IIHGWLILSSFMLLFIFTYLY. The Lumenal segment spans residues 204–216; that stretch reads LEELLRAYNIPMD. A helical transmembrane segment spans residues 217-237; sequence YPTALLIMWNFGVVGMMSIHW. Residues 238–242 are Cytoplasmic-facing; the sequence is QGPLR. Residues 243-263 traverse the membrane as a helical segment; that stretch reads LQQGYLIFVAALMALVFIKYL. At 264-265 the chain is on the lumenal side; it reads PE. A helical membrane pass occupies residues 266 to 286; the sequence is WTAWAVLAAISIWDLIAVLSP. D279 is a catalytic residue. The Cytoplasmic segment spans residues 287-453; that stretch reads RGPLRILVET…QNHPDGQEER (167 aa). Positions 320–481 are interaction with Mettl2; the sequence is NTVTPQQSQA…ASSYGDWTTT (162 aa). Low complexity predominate over residues 327–350; the sequence is SQATASSSPSSSNSTTTTRATQNS. Disordered regions lie at residues 327–379 and 421–449; these read SQAT…DGSV and EVQS…HPDG. Polar residues-rich tracts occupy residues 361–370 and 421–443; these read GQRTGNSHPR and EVQS…TAPD. Residues 454–474 form a helical membrane-spanning segment; that stretch reads GIKLGLGDFIFYSVLVGKASS. The active site involves D461. Residues 475-481 are Lumenal-facing; it reads YGDWTTT. A helical transmembrane segment spans residues 482 to 502; it reads IACFVAILIGLCLTLLLLAIW. At 503-506 the chain is on the cytoplasmic side; it reads RKAL. Residues 507–509 carry the PAL motif; sequence PAL. The segment at residues 507–527 is an intramembrane region (helical); the sequence is PALPISITFGLIFCFATSAVV. Residues 528–541 are Cytoplasmic-facing; the sequence is KPFMEDLSAKQVFI.

Belongs to the peptidase A22A family. As to quaternary structure, homodimer. Component of the gamma-secretase complex, a complex composed of a presenilin (Psn) homodimer, nicastrin (Nct), Aph-1 and Pen-2. Interacts with Mettl2. Isoform 2 shows a better interaction with Mettl2 than isoform 1. In terms of processing, cleaved. The cleavage, which probably takes place between the 6th and the 7th transmembrane regions, may be required for activation of the gamma-secretase activity. In terms of tissue distribution, maternally expressed in nurse and follicle cells. In early embryos, expressed in all or most cells and later increases in CNS and epidermal tissues. In larvae, expression is seen in all imaginal disks, brain and optic lobes. In pupae, expression is seen in eye disk and brain.

The protein localises to the endoplasmic reticulum membrane. Its subcellular location is the golgi apparatus membrane. Probable catalytic subunit of the gamma-secretase complex, an endoprotease complex that catalyzes the intramembrane cleavage of integral membrane proteins such as Notch receptor. Required for S3 cleavage of Notch, which releases activated Notch protein from the cell membrane. Involved in the patterning of the optic lobes. In Drosophila melanogaster (Fruit fly), this protein is Presenilin homolog (Psn).